The primary structure comprises 135 residues: uncharacterized protein (135 aa).

A disordered region spans residues Met1–Gly70.

This is an uncharacterized protein from Homo sapiens (Human).